A 219-amino-acid chain; its full sequence is Octanoyltransferase (219 aa).

In terms of domain architecture, BPL/LPL catalytic spans 24-212 (KFRRECILFL…NLNSFLGPIS (189 aa)). Residues 69-76 (RGGDFTAH), 140-142 (SIG), and 153-155 (GVA) each bind substrate. Cysteine 171 functions as the Acyl-thioester intermediate in the catalytic mechanism.

Belongs to the LipB family.

It localises to the cytoplasm. It carries out the reaction octanoyl-[ACP] + L-lysyl-[protein] = N(6)-octanoyl-L-lysyl-[protein] + holo-[ACP] + H(+). Its pathway is protein modification; protein lipoylation via endogenous pathway; protein N(6)-(lipoyl)lysine from octanoyl-[acyl-carrier-protein]: step 1/2. In terms of biological role, catalyzes the transfer of endogenously produced octanoic acid from octanoyl-acyl-carrier-protein onto the lipoyl domains of lipoate-dependent enzymes. Lipoyl-ACP can also act as a substrate although octanoyl-ACP is likely to be the physiological substrate. This chain is Octanoyltransferase, found in Leptospira borgpetersenii serovar Hardjo-bovis (strain JB197).